The chain runs to 90 residues: Probable Fe(2+)-trafficking protein (90 aa).

Belongs to the Fe(2+)-trafficking protein family. In terms of assembly, monomer.

Functionally, could be a mediator in iron transactions between iron acquisition and iron-requiring processes, such as synthesis and/or repair of Fe-S clusters in biosynthetic enzymes. The chain is Probable Fe(2+)-trafficking protein from Sodalis glossinidius (strain morsitans).